We begin with the raw amino-acid sequence, 101 residues long: Interleukin-8 (101 aa).

A signal peptide spans 1–22 (MTSKLAVALLAAFLLSAALCEG). At arginine 27 the chain carries Citrulline. Disulfide bonds link cysteine 34–cysteine 61 and cysteine 36–cysteine 77.

It belongs to the intercrine alpha (chemokine CxC) family. Homodimer. Interacts with TNFAIP6 (via Link domain); this interaction interferes with chemokine binding to glycosaminoglycans. In terms of processing, citrullination at Arg-27 prevents proteolysis, and dampens tissue inflammation, it also enhances leukocytosis, possibly through impaired chemokine clearance from the blood circulation.

The protein localises to the secreted. Chemotactic factor that mediates inflammatory response by attracting neutrophils, basophils, and T-cells to clear pathogens and protect the host from infection. Also plays an important role in neutrophil activation. Released in response to an inflammatory stimulus, exerts its effect by binding to the G-protein-coupled receptors CXCR1 and CXCR2, primarily found in neutrophils, monocytes and endothelial cells. G-protein heterotrimer (alpha, beta, gamma subunits) constitutively binds to CXCR1/CXCR2 receptor and activation by IL8 leads to beta and gamma subunits release from Galpha (GNAI2 in neutrophils) and activation of several downstream signaling pathways including PI3K and MAPK pathways. The protein is Interleukin-8 (CXCL8) of Macaca mulatta (Rhesus macaque).